The following is a 223-amino-acid chain: Deoxyribose-phosphate aldolase (223 aa).

Asp-89 (proton donor/acceptor) is an active-site residue. Lys-152 functions as the Schiff-base intermediate with acetaldehyde in the catalytic mechanism. The active-site Proton donor/acceptor is Lys-181.

The protein belongs to the DeoC/FbaB aldolase family. DeoC type 1 subfamily.

It is found in the cytoplasm. It carries out the reaction 2-deoxy-D-ribose 5-phosphate = D-glyceraldehyde 3-phosphate + acetaldehyde. It participates in carbohydrate degradation; 2-deoxy-D-ribose 1-phosphate degradation; D-glyceraldehyde 3-phosphate and acetaldehyde from 2-deoxy-alpha-D-ribose 1-phosphate: step 2/2. Functionally, catalyzes a reversible aldol reaction between acetaldehyde and D-glyceraldehyde 3-phosphate to generate 2-deoxy-D-ribose 5-phosphate. This chain is Deoxyribose-phosphate aldolase, found in Bacillus cereus (strain G9842).